The primary structure comprises 473 residues: Spliceosome-associated protein CWC27 homolog (473 aa).

Ser-2 carries the N-acetylserine modification. Residues 11–166 enclose the PPIase cyclophilin-type domain; sequence TNGKVLLKTT…NPHKIKSCEV (156 aa). The span at 177-193 shows a compositional bias: basic and acidic residues; sequence REIKRPKKEKPEEEVKK. 2 disordered regions span residues 177–386 and 399–473; these read REIK…EDQT and QAIA…KERR. Residues 206 to 230 are a coiled coil; sequence SFGEEAEEEEEEVNRVSQSMKGKSK. Positions 231 to 241 are enriched in basic and acidic residues; it reads SSHDLLKDDPH. Over residues 257-275 the composition is skewed to acidic residues; sequence GDLDDDGEDESAEYDEYVD. Composition is skewed to basic and acidic residues over residues 276–287, 305–348, and 360–372; these read GDEKNLMRERIA, EVEK…KRSE, and EYRR…EALR. Positions 307–378 form a coiled coil; sequence EKKSVSRSEE…EALRKQQSKK (72 aa). Ser-347 carries the phosphoserine modification. The segment covering 405–419 has biased composition (acidic residues); that stretch reads PENDIPETEVEDDEG. Basic and acidic residues-rich tracts occupy residues 426-438 and 458-473; these read QFED…KDAS and RREE…KERR.

The protein belongs to the cyclophilin-type PPIase family. In terms of assembly, part of the activated spliceosome B/catalytic step 1 spliceosome, one of the forms of the spliceosome which has a well-formed active site but still cannot catalyze the branching reaction and is composed at least of 52 proteins, the U2, U5 and U6 snRNAs and the pre-mRNA. Recruited during early steps of activated spliceosome B maturation, it is probably one of the first proteins released from this complex as he matures to the spliceosome C complex. Component of the minor spliceosome, which splices U12-type introns.

It localises to the nucleus. As part of the spliceosome, plays a role in pre-mRNA splicing. Probable inactive PPIase with no peptidyl-prolyl cis-trans isomerase activity. As a component of the minor spliceosome, involved in the splicing of U12-type introns in pre-mRNAs. In Macaca fascicularis (Crab-eating macaque), this protein is Spliceosome-associated protein CWC27 homolog.